The chain runs to 557 residues: Organic cation/carnitine transporter 2 (557 aa).

At Met-1–Leu-20 the chain is on the cytoplasmic side. The helical transmembrane segment at Ile-21 to Phe-41 threads the bilayer. The Extracellular portion of the chain corresponds to Leu-42–Ala-142. 3 N-linked (GlcNAc...) asparagine glycosylation sites follow: Asn-57, Asn-64, and Asn-91. Residues Pro-143–Leu-163 form a helical membrane-spanning segment. The Cytoplasmic portion of the chain corresponds to Ser-164 to Val-172. The helical transmembrane segment at Leu-173–Phe-193 threads the bilayer. Over Glu-194–Thr-197 the chain is Extracellular. The chain crosses the membrane as a helical span at residues Val-198–Gly-218. Gly-218 to Ser-225 serves as a coordination point for ATP. The Cytoplasmic portion of the chain corresponds to Thr-219–Thr-232. Residues Leu-233 to Ile-253 traverse the membrane as a helical segment. At Arg-254–Arg-257 the chain is on the extracellular side. The helical transmembrane segment at Met-258 to Pro-278 threads the bilayer. Over Glu-279–Arg-341 the chain is Cytoplasmic. The helical transmembrane segment at Val-342–Ser-362 threads the bilayer. The Extracellular segment spans residues Leu-363–Tyr-373. Residues Val-374–Leu-394 form a helical membrane-spanning segment. Over Gln-395–Ala-406 the chain is Cytoplasmic. A helical membrane pass occupies residues Leu-407–Leu-427. The Extracellular segment spans residues Ser-428–Ala-430. The helical transmembrane segment at Leu-431–Ala-451 threads the bilayer. Residues Glu-452–Gly-462 are Cytoplasmic-facing. The helical transmembrane segment at Val-463–Leu-483 threads the bilayer. Residues Gly-484–Arg-488 lie on the Extracellular side of the membrane. The residue at position 486 (Tyr-486) is a Phosphotyrosine. Residues Phe-489–Phe-509 form a helical membrane-spanning segment. Residues Pro-510–Phe-557 lie on the Cytoplasmic side of the membrane. Phosphoserine is present on Ser-548. Phosphothreonine is present on Thr-550.

This sequence belongs to the major facilitator (TC 2.A.1) superfamily. Organic cation transporter (TC 2.A.1.19) family. In terms of assembly, interacts with PDZK1. Widely expressed. Expressed in kidney, liver and testis. Expressed at the brush border of the small, large intestine and colon (at protein level).

It localises to the apical cell membrane. The protein resides in the basal cell membrane. Its subcellular location is the cell membrane. The catalysed reaction is (R)-carnitine(out) + Na(+)(out) = (R)-carnitine(in) + Na(+)(in). It carries out the reaction glycine betaine(out) + Na(+)(out) = glycine betaine(in) + Na(+)(in). The enzyme catalyses glycine betaine(out) + (R)-carnitine(in) = glycine betaine(in) + (R)-carnitine(out). It catalyses the reaction O-butanoyl-(R)-carnitine(out) + Na(+)(out) = O-butanoyl-(R)-carnitine(in) + Na(+)(in). The catalysed reaction is O-acetyl-(R)-carnitine(out) + Na(+)(out) = O-acetyl-(R)-carnitine(in) + Na(+)(in). It carries out the reaction O-propanoyl-(R)-carnitine(out) + Na(+)(out) = O-propanoyl-(R)-carnitine(in) + Na(+)(in). The enzyme catalyses (S)-carnitine(out) + Na(+)(out) = (S)-carnitine(in) + Na(+)(in). It catalyses the reaction an O-acyl-(R)-carnitine(out) + Na(+)(out) = an O-acyl-(R)-carnitine(in) + Na(+)(in). The catalysed reaction is L-glutamyl-L-arginyl-glycyl-L-methionyl-L-threonine(out) + Na(+)(out) = L-glutamyl-L-arginyl-glycyl-L-methionyl-L-threonine(in) + Na(+)(in). It carries out the reaction N,N-dimethylglycine(out) + Na(+)(out) = N,N-dimethylglycine(in) + Na(+)(in). Inhibited by emetine, quinidine and verapamil. The IC(50) of emetine is 4.2 uM. Not inhibited by valproic acid. Transport of (R)-carnitine is stimulated by cholesterol in the plasma membrane. Its function is as follows. Sodium-ion dependent, high affinity carnitine transporter. Involved in the active cellular uptake of carnitine. Transports one sodium ion with one molecule of carnitine. Also transports organic cations such as tetraethylammonium (TEA) without the involvement of sodium. Also relative uptake activity ratio of carnitine to TEA is 11.3. May also contribute to regulate the transport of organic compounds in testis across the blood-testis-barrier. The protein is Organic cation/carnitine transporter 2 of Mus musculus (Mouse).